The following is a 262-amino-acid chain: Protein CUSTOS (262 aa).

2 disordered regions span residues 1-79 (MAAP…LQTT) and 126-262 (FTSV…IPAN). Positions 9–18 (SDSESSNSSS) are enriched in low complexity. The segment covering 51–61 (ANSQLSTSQPS) has biased composition (polar residues). Serine 61 carries the post-translational modification Phosphoserine. At threonine 79 the chain carries Phosphothreonine. Serine 138 is modified (phosphoserine). Residue threonine 182 is modified to Phosphothreonine. Residues 188-199 (KKKRKLKKKAKK) are compositionally biased toward basic residues. The segment covering 200–209 (VASVDSAVAA) has biased composition (low complexity). A compositionally biased stretch (polar residues) spans 210-221 (TTPTSMATVQKQ). Threonine 211 bears the Phosphothreonine mark. The Nucleolar localization signal (NLS) signature appears at 236-241 (KKKKKA).

This sequence belongs to the CUSTOS family.

It is found in the nucleus envelope. In terms of biological role, plays a role in the regulation of Wnt signaling pathway during early development. The polypeptide is Protein CUSTOS (Homo sapiens (Human)).